Here is a 623-residue protein sequence, read N- to C-terminus: EIN3-binding F-box protein 2 (623 aa).

In terms of domain architecture, F-box spans 52–106; the sequence is QTSIDVLPEECLFEILRRLPSGQERSACACVSKHWLNLLSSISRSEVNESSVQDV. 18 LRR repeats span residues 119–147, 151–176, 177–202, 203–228, 229–254, 255–281, 307–334, 335–360, 361–386, 387–413, 414–441, 442–467, 468–494, 495–521, 522–547, 548–574, 575–600, and 601–623; these read GKKATDLRLAAIAVGTSSRGGLGKLQIRG, ESKVTDVGLGAVAHGCPSLRIVSLWN, LPAVSDLGLSEIARSCPMIEKLDLSR, CPGITDSGLVAIAENCVNLSDLTIDS, CSGVGNEGLRAIARRCVNLRSISIRS, CPRIGDQGVAFLLAQAGSYLTKVKLQM, LQGVNEKGFWVMGNAKGLKKLKSLSVMS, CRGMTDVGLEAVGNGCPDLKHVSLNK, CLLVSGKGLVALAKSALSLESLKLEE, CHRINQFGLMGFLMNCGSKLKAFSLAN, CLGISDFNSESSLPSPSCSSLRSLSIRC, CPGFGDASLAFLGKFCHQLQDVELCG, LNGVTDAGVRELLQSNNVGLVKVNLSE, CINVSDNTVSAISVCHGRTLESLNLDG, CKNITNASLVAVAKNCYSVNDLDISN, TLVSDHGIKALASSPNHLNLQVLSIGG, CSSITDKSKACIQKLGRTLLGLNIQR, and CGRISSSTVDTLLENLWRCDILY.

In terms of assembly, part of a SCF (SKP1-cullin-F-box) protein ligase complex. Interacts with CUL1, SKP1A/ASK1, SKP1B/ASK2, EIN3, and EIL1. In terms of tissue distribution, ubiquitous.

The protein resides in the nucleus. Its pathway is protein modification; protein ubiquitination. Functionally, component of SCF(EBF1) E3 ubiquitin ligase complexes, which may mediate the ubiquitination and subsequent proteasomal degradation of target proteins (probably including EIN3 and EIL1). Regulator of the ethylene signaling cascade by modulating the stability of EIN3 and EIL1 proteins. The polypeptide is EIN3-binding F-box protein 2 (EBF2) (Arabidopsis thaliana (Mouse-ear cress)).